Here is a 408-residue protein sequence, read N- to C-terminus: Phosphoglycerate kinase (408 aa).

Residues 28–30 (DIN), arginine 43, 66–69 (HQGR), arginine 123, and arginine 163 each bind substrate. Residues glutamate 334 and 358–361 (GGHT) each bind ATP.

This sequence belongs to the phosphoglycerate kinase family. Monomer.

It is found in the cytoplasm. The catalysed reaction is (2R)-3-phosphoglycerate + ATP = (2R)-3-phospho-glyceroyl phosphate + ADP. It participates in carbohydrate degradation; glycolysis; pyruvate from D-glyceraldehyde 3-phosphate: step 2/5. This Pyrobaculum aerophilum (strain ATCC 51768 / DSM 7523 / JCM 9630 / CIP 104966 / NBRC 100827 / IM2) protein is Phosphoglycerate kinase.